Consider the following 831-residue polypeptide: Periplasmic nitrate reductase (831 aa).

A signal peptide (tat-type signal) is located at residues 1 to 29 (MKISRRDFIKQTAITATASVAGVTLPAGA). The 4Fe-4S Mo/W bis-MGD-type domain maps to 41-97 (LKWSKAPCRFCGTGCGVTVAVKDNKVVATQGDPQAEVNKGLNCVKGYFLSKIMYGQD). Positions 48, 51, 55, and 83 each coordinate [4Fe-4S] cluster. Mo-bis(molybdopterin guanine dinucleotide) is bound by residues K85, Q152, N177, C181, 214-221 (WGSNMAEM), 245-249 (STFTH), 264-266 (QTD), M375, Q379, N485, 511-512 (SD), K534, D561, and 721-730 (TGRVLEHWHS). W797 contributes to the substrate binding site. Mo-bis(molybdopterin guanine dinucleotide) contacts are provided by N805 and K822.

Belongs to the prokaryotic molybdopterin-containing oxidoreductase family. NasA/NapA/NarB subfamily. Component of the periplasmic nitrate reductase NapAB complex composed of NapA and NapB. It depends on [4Fe-4S] cluster as a cofactor. The cofactor is Mo-bis(molybdopterin guanine dinucleotide). In terms of processing, predicted to be exported by the Tat system. The position of the signal peptide cleavage has been experimentally proven.

The protein localises to the periplasm. It carries out the reaction 2 Fe(II)-[cytochrome] + nitrate + 2 H(+) = 2 Fe(III)-[cytochrome] + nitrite + H2O. In terms of biological role, catalytic subunit of the periplasmic nitrate reductase complex NapAB. Receives electrons from NapB and catalyzes the reduction of nitrate to nitrite. This Cupriavidus necator (strain ATCC 17699 / DSM 428 / KCTC 22496 / NCIMB 10442 / H16 / Stanier 337) (Ralstonia eutropha) protein is Periplasmic nitrate reductase.